Reading from the N-terminus, the 498-residue chain is Ulvan-active sulfatase (498 aa).

Residues 1-22 (MNSKKTGVIILGCIAFLHIACS) form the signal peptide. Positions 55, 56, 95, 266, and 267 each coordinate Ca(2+). C95 serves as the catalytic Nucleophile. C95 bears the 3-oxoalanine (Cys) mark.

It belongs to the sulfatase family. Ca(2+) is required as a cofactor. The conversion to 3-oxoalanine (also known as C-formylglycine, FGly), of a serine or cysteine residue in prokaryotes and of a cysteine residue in eukaryotes, is critical for catalytic activity. This post-translational modification is severely defective in multiple sulfatase deficiency (MSD).

The protein localises to the periplasm. Sulfatase involved in ulvan degradation. Ulvan is the main polysaccharide component of the Ulvales (green seaweed) cell wall. It is composed of disaccharide building blocks comprising 3-sulfated rhamnose (Rha3S) linked to D-glucuronic acid (GlcA), L-iduronic acid (IduA), or D-xylose (Xyl). The chain is Ulvan-active sulfatase from Formosa agariphila (strain DSM 15362 / KCTC 12365 / LMG 23005 / KMM 3901 / M-2Alg 35-1).